The following is a 216-amino-acid chain: Adenylate kinase (216 aa).

13–18 lines the ATP pocket; sequence GAGKGT. The segment at 33-66 is NMP; it reads TTGDALRANKDMDISDMDTEYDTPREYMEAGDLV. AMP is bound by residues threonine 34, arginine 39, 64 to 66, 89 to 92, and glutamine 96; these read DLV and GYPR. The segment at 125–162 is LID; the sequence is GRRVCDDCGTNYHVEFNQPEEDGVCDECGGDLIQRDDD. Arginine 126 contributes to the ATP binding site. Zn(2+) is bound by residues cysteine 129, cysteine 132, cysteine 149, and cysteine 152. Residues arginine 159 and arginine 170 each coordinate AMP. Glutamine 198 is an ATP binding site.

The protein belongs to the adenylate kinase family. Monomer.

The protein localises to the cytoplasm. It carries out the reaction AMP + ATP = 2 ADP. It participates in purine metabolism; AMP biosynthesis via salvage pathway; AMP from ADP: step 1/1. Functionally, catalyzes the reversible transfer of the terminal phosphate group between ATP and AMP. Plays an important role in cellular energy homeostasis and in adenine nucleotide metabolism. The chain is Adenylate kinase from Haloarcula marismortui (strain ATCC 43049 / DSM 3752 / JCM 8966 / VKM B-1809) (Halobacterium marismortui).